Here is a 339-residue protein sequence, read N- to C-terminus: Replication factor C subunit 4 (339 aa).

Residue 49-56 (GPPGTGKT) coordinates ATP.

It belongs to the activator 1 small subunits family. Heterotetramer of subunits RFC2, RFC3, RFC4 and RFC5 that can form a complex with RFC1.

Its subcellular location is the nucleus. Its function is as follows. May be involved in DNA replication and thus regulate cell proliferation. The sequence is that of Replication factor C subunit 4 (RFC4) from Arabidopsis thaliana (Mouse-ear cress).